Reading from the N-terminus, the 239-residue chain is MKIFPAIDIKDKKCVRLIKGDFNNKTEYEISPVDQAGKYKDHGFKNLHIVDLDGALTGETVNLDIIKEIVHKFDLKIEVGGGVRSIDSIEKYINAGVEKVILGSAAIKNKNFLKEACQKFPNKIALGLDAKDGYLSVSGWKENSNQLTLDFLKEVNDYGASRLIYTDINRDGTKESPNFEETTNVANVSNCPVIISGGVSSIDDIKKAKGLKNIEGIIVGKAIYDGDIKLEELVKELDA.

Aspartate 8 acts as the Proton acceptor in catalysis. The Proton donor role is filled by aspartate 129.

The protein belongs to the HisA/HisF family.

It is found in the cytoplasm. The catalysed reaction is 1-(5-phospho-beta-D-ribosyl)-5-[(5-phospho-beta-D-ribosylamino)methylideneamino]imidazole-4-carboxamide = 5-[(5-phospho-1-deoxy-D-ribulos-1-ylimino)methylamino]-1-(5-phospho-beta-D-ribosyl)imidazole-4-carboxamide. It participates in amino-acid biosynthesis; L-histidine biosynthesis; L-histidine from 5-phospho-alpha-D-ribose 1-diphosphate: step 4/9. In Pelagibacter ubique (strain HTCC1062), this protein is 1-(5-phosphoribosyl)-5-[(5-phosphoribosylamino)methylideneamino] imidazole-4-carboxamide isomerase.